Reading from the N-terminus, the 333-residue chain is Ribosomal RNA small subunit methyltransferase H (333 aa).

S-adenosyl-L-methionine contacts are provided by residues 31 to 33 (GGY), D49, F76, D134, and Q141.

It belongs to the methyltransferase superfamily. RsmH family.

The protein resides in the cytoplasm. It catalyses the reaction cytidine(1402) in 16S rRNA + S-adenosyl-L-methionine = N(4)-methylcytidine(1402) in 16S rRNA + S-adenosyl-L-homocysteine + H(+). In terms of biological role, specifically methylates the N4 position of cytidine in position 1402 (C1402) of 16S rRNA. In Wolbachia sp. subsp. Brugia malayi (strain TRS), this protein is Ribosomal RNA small subunit methyltransferase H.